Consider the following 513-residue polypeptide: EGF-like domain-containing protein 1 (513 aa).

Residues 1-21 form the signal peptide; sequence MMHTFLRRLCVVALCLGYIKA. Residues 72–108 form the EGF-like domain; the sequence is PTALCGPPCLNGGECYEPTVGTYMCMCPEAFYGNKCE. 3 cysteine pairs are disulfide-bonded: C76–C86, C80–C96, and C98–C107. In terms of domain architecture, ZP spans 115-364; sequence ECSGTEITIN…TSCDSVVCPS (250 aa). The disordered stretch occupies residues 356–411; sequence SCDSVVCPSPPQSVPSNPQNIPPANPQNIPPANPQNIPPANPQISPSSSQRKRRAA. The span at 375–396 shows a compositional bias: pro residues; that stretch reads NIPPANPQNIPPANPQNIPPAN. 2 N-linked (GlcNAc...) asparagine glycosylation sites follow: N438 and N503.

Component of the acid-insoluble organic matrix of calcified layers of the shell (at protein level).

The protein localises to the secreted. The protein is EGF-like domain-containing protein 1 of Lottia gigantea (Giant owl limpet).